The chain runs to 312 residues: Ribosomal protein L11 methyltransferase (312 aa).

S-adenosyl-L-methionine-binding residues include threonine 163, glycine 184, aspartate 206, and asparagine 248.

The protein belongs to the methyltransferase superfamily. PrmA family.

The protein resides in the cytoplasm. The catalysed reaction is L-lysyl-[protein] + 3 S-adenosyl-L-methionine = N(6),N(6),N(6)-trimethyl-L-lysyl-[protein] + 3 S-adenosyl-L-homocysteine + 3 H(+). Methylates ribosomal protein L11. The protein is Ribosomal protein L11 methyltransferase of Clostridium botulinum (strain Loch Maree / Type A3).